A 43-amino-acid polypeptide reads, in one-letter code: Potassium channel toxin gamma-KTx 4.13 (43 aa).

4 disulfide bridges follow: Cys-5–Cys-23, Cys-11–Cys-34, Cys-20–Cys-39, and Cys-24–Cys-41.

It belongs to the ergtoxin family. Gamma-KTx 4 subfamily. In terms of tissue distribution, expressed by the venom gland.

Its subcellular location is the secreted. Reversibly blocks Kv11/ERG potassium channels. This chain is Potassium channel toxin gamma-KTx 4.13, found in Centruroides noxius (Mexican scorpion).